A 391-amino-acid chain; its full sequence is Putative glutamate--cysteine ligase 2-2 (391 aa).

It belongs to the glutamate--cysteine ligase type 2 family. YbdK subfamily.

It carries out the reaction L-cysteine + L-glutamate + ATP = gamma-L-glutamyl-L-cysteine + ADP + phosphate + H(+). In terms of biological role, ATP-dependent carboxylate-amine ligase which exhibits weak glutamate--cysteine ligase activity. In Saccharopolyspora erythraea (strain ATCC 11635 / DSM 40517 / JCM 4748 / NBRC 13426 / NCIMB 8594 / NRRL 2338), this protein is Putative glutamate--cysteine ligase 2-2.